Here is a 216-residue protein sequence, read N- to C-terminus: ATP-dependent dethiobiotin synthetase BioD (216 aa).

13–18 (EVGKTY) contributes to the ATP binding site. T17 contributes to the Mg(2+) binding site. K38 is an active-site residue. T42 is a substrate binding site. Residues D47 and 112–115 (EGVG) each bind ATP. 2 residues coordinate Mg(2+): D47 and E112.

It belongs to the dethiobiotin synthetase family. Homodimer. Mg(2+) is required as a cofactor.

It is found in the cytoplasm. The enzyme catalyses (7R,8S)-7,8-diammoniononanoate + CO2 + ATP = (4R,5S)-dethiobiotin + ADP + phosphate + 3 H(+). It functions in the pathway cofactor biosynthesis; biotin biosynthesis; biotin from 7,8-diaminononanoate: step 1/2. Functionally, catalyzes a mechanistically unusual reaction, the ATP-dependent insertion of CO2 between the N7 and N8 nitrogen atoms of 7,8-diaminopelargonic acid (DAPA, also called 7,8-diammoniononanoate) to form a ureido ring. In Endomicrobium trichonymphae, this protein is ATP-dependent dethiobiotin synthetase BioD.